We begin with the raw amino-acid sequence, 208 residues long: MDFYYLPGSAPCRSVLMTAKALGIELNKKLLNLQAGEHLKPEFLKINPQHTIPTLVDGDFALWESRAIMVYLVEKYGKTDSLFPKCPKKRAVINQRLYFDMGTLYKSFADYYYPQIFAKAPADPELFKKIETAFDFLNTFLKGHEYAAGDSLTVADLALLASVSTFEVASFDFSKYPNVAKWYANLKTVAPGWEENWAGCLEFKKYFG.

In terms of domain architecture, GST N-terminal spans 1–80 (MDFYYLPGSA…YLVEKYGKTD (80 aa)). Glutathione-binding positions include Ser-9, 50–52 (HTI), and 64–66 (ESR). One can recognise a GST C-terminal domain in the interval 86–207 (CPKKRAVINQ…AGCLEFKKYF (122 aa)).

This sequence belongs to the GST superfamily. Theta family. As to quaternary structure, homodimer.

It catalyses the reaction RX + glutathione = an S-substituted glutathione + a halide anion + H(+). In terms of biological role, conjugation of reduced glutathione to a wide number of exogenous and endogenous hydrophobic electrophiles. The chain is Glutathione S-transferase 1 (Gst1) from Musca domestica (House fly).